The sequence spans 354 residues: Membrane progestin receptor alpha-B (354 aa).

Residues 1–76 are Cytoplasmic-facing; the sequence is MATVVMEQIG…LTLFQRHNES (76 aa). A helical transmembrane segment spans residues 77–97; it reads VNVWTHLLASLIILVKFQELS. Topologically, residues 98–110 are extracellular; it reads ETVDFLRDPHAQP. The helical transmembrane segment at 111 to 131 threads the bilayer; it reads MFILLLAAFTYLGCSALAHLL. Residues 132-141 lie on the Cytoplasmic side of the membrane; that stretch reads SAKSEISHYT. The chain crosses the membrane as a helical span at residues 142–162; sequence FYFLDYVGVAVYQYGSALAHF. The Extracellular segment spans residues 163-175; that stretch reads YYVVEEEWHAQVR. A helical membrane pass occupies residues 176–196; that stretch reads TFFLPASAFLAWLSCTGCCYG. Residues 197–244 lie on the Cytoplasmic side of the membrane; that stretch reads KYASPKLPKFVHKLFQVVPSGLAYCLDISPVLHRIYRCYSSEHWCADQ. Residues 245-265 form a helical membrane-spanning segment; the sequence is AVVYHCYQVLFFLISAYFFSY. Over 266–277 the chain is Extracellular; sequence PHPERWFPGRCD. Residues 278–298 traverse the membrane as a helical segment; the sequence is FIGQGHQIFHVFLVLCTLVQI. Residues 299–318 are Cytoplasmic-facing; sequence EAVRLDYTERRRLYEHLHGD. A helical transmembrane segment spans residues 319–339; that stretch reads LAHDAVALFIFTACCSALTAF. Topologically, residues 340–354 are extracellular; sequence YVRKRVKTYLEEKQE.

It belongs to the ADIPOR family.

Its subcellular location is the cell membrane. In terms of biological role, steroid membrane receptor. Signals upon progestin binding, resulting in rapid activation of MAPK and down-regulation of adenylyl cyclase activity. Interacts with steroids with varying degrees of affinity, showing specificity for activation by the maturation-inducing steroid (MIS) 4-pregnen-17,20beta-diol-3-one (17,20beta-DHP). Capable of mediating progestin-induced oocyte maturation. The chain is Membrane progestin receptor alpha-B (paqr7b) from Danio rerio (Zebrafish).